Here is a 470-residue protein sequence, read N- to C-terminus: GTPase Der (470 aa).

2 EngA-type G domains span residues 2 to 165 and 201 to 372; these read KTIA…GLEA and IRVG…ENFS. GTP contacts are provided by residues 8–15, 55–59, 117–120, 207–214, 254–258, and 318–321; these read GKPNVGKS, DTGGI, NKID, GKVNVGKS, DTAGI, and NKWD. A KH-like domain is found at 373 to 457; sequence RRIPTSILNK…PILIRARKRG (85 aa).

Belongs to the TRAFAC class TrmE-Era-EngA-EngB-Septin-like GTPase superfamily. EngA (Der) GTPase family. As to quaternary structure, associates with the 50S ribosomal subunit.

In terms of biological role, GTPase that plays an essential role in the late steps of ribosome biogenesis. This is GTPase Der from Wolinella succinogenes (strain ATCC 29543 / DSM 1740 / CCUG 13145 / JCM 31913 / LMG 7466 / NCTC 11488 / FDC 602W) (Vibrio succinogenes).